Reading from the N-terminus, the 446-residue chain is Tryptophan synthase beta chain 2 (446 aa).

Position 110 is an N6-(pyridoxal phosphate)lysine (K110).

This sequence belongs to the TrpB family. In terms of assembly, tetramer of two alpha and two beta chains. Pyridoxal 5'-phosphate is required as a cofactor.

It carries out the reaction (1S,2R)-1-C-(indol-3-yl)glycerol 3-phosphate + L-serine = D-glyceraldehyde 3-phosphate + L-tryptophan + H2O. It participates in amino-acid biosynthesis; L-tryptophan biosynthesis; L-tryptophan from chorismate: step 5/5. Its function is as follows. The beta subunit is responsible for the synthesis of L-tryptophan from indole and L-serine. The sequence is that of Tryptophan synthase beta chain 2 (trpB2) from Pyrococcus furiosus (strain ATCC 43587 / DSM 3638 / JCM 8422 / Vc1).